We begin with the raw amino-acid sequence, 1180 residues long: MSGLCLVLLLSIFAVSQSSGECSDVSFSSVASKLDGLKRVTRLSVSGHISAYHVKVSISDDDFQLVRLSNGNPLVLYSTLSNTPSWTHVDFLATEVRIFPAFEQATEDVRGPLLILTICDYDTPITAFDDSSYTVEAHHAGLVSMYENDLCVVFRTYRSGVFFFSMADQGDVLIAQIIHGTVHVIFDFGSLTPSRISAGKALDDGRWHEMRWLHQFDSVQLSIDGVLLNQTAPTGLYRKLDLHSVVHIGGRPNDDFSQGIETTFTGCIARLQLNNADLLQLSPNEVHNQCQMPKPPSFTLHNSSRAVLPFTFLPFSFEFRIVPINGPLVTLFDAENGTLVDVVIDEESKLHLVSNITKFKQAANPAIDVADGAWHSFSLRIRGVRMEIDIDGYTVLWLEGHEVRRVSQRLSNFILSASGCYRSVTIDLTSVRVDGNVTRGECTFQEKCLPNPCENGGGCVQSALDDYVCNCKEGYKGKNCHTTDLPHSCEEWVFTKGNKQKAVQGRKVLIDIDGGGEMQPINVTCKTERDEIGIDGVSTILEHDLLRPMIVTGDNKPGAVRYSLTYGISTEQMDRLVEGFEACSQFMRYTCRGGARLMTQGDERSPSSWYSTRSDKHGLQWGEAPPYSRMCSCAINGSCLHNRMCNCDSGEDSTDEGVNPYSQLLPVTGLFLGGTTKSSSIEVEIGPLKCRNRATFDPVTFSNRNAKLSGAQTFNQRTFDVSLHVKFSHSQMSILSWHSTDDLHWFHLYVNDGKIVGEVVNGGESQQIVSEHRYDDGKFHAIYWEADSTGMFLKVDGQRKSVKTSFILPTVYMWIVGSRTEKGSTGFAGVIRNVHLCGVELALGQYARKETERGVAIGDDGYCRPDLCQNGGQCVDKYDGYVCDCSMTPFGGSDCTKEYGMMVPAGSSIQIPWQNPAHQAMCHRIAIQTTSRNTTILRSKALFADSTFNMTVDDNGNLQMMAYDGFFFHFKRQSKRHNLSDDIMHDISFCASKHHFNVSVDGMQVITIEGNWTFFESFNVWHFLDENFEGCVSRIQTGSAFPLKNPKTARLNYSGKIRFGTCPIEAVSRQQMYDFNPQPDLISSTIKTSTEDIKIFSVSQNKQDLVSKAIIGGGILALSLFILCMSSLICYMRSRPEGVYKTNETGENCSPSRSEEPLVHNTTSNNNNNPTYASNKEYFC.

Residues 1–20 form the signal peptide; sequence MSGLCLVLLLSIFAVSQSSG. At 21–1108 the chain is on the extracellular side; that stretch reads ECSDVSFSSV…SQNKQDLVSK (1088 aa). The 167-residue stretch at 124 to 290 folds into the Laminin G-like 1 domain; that stretch reads PITAFDDSSY…LSPNEVHNQC (167 aa). Asn-229 carries an N-linked (GlcNAc...) asparagine glycan. Cysteines 267 and 290 form a disulfide. Asn-302, Asn-336, Asn-355, and Asn-436 each carry an N-linked (GlcNAc...) asparagine glycan. One can recognise an EGF-like 1 domain in the interval 444-481; it reads FQEKCLPNPCENGGGCVQSALDDYVCNCKEGYKGKNCH. Cystine bridges form between Cys-448/Cys-459, Cys-453/Cys-469, and Cys-471/Cys-480. N-linked (GlcNAc...) asparagine glycosylation is found at Asn-522 and Asn-636. Positions 695–863 constitute a Laminin G-like 2 domain; sequence TFDPVTFSNR…GVAIGDDGYC (169 aa). The region spanning 859-896 is the EGF-like 2 domain; it reads DDGYCRPDLCQNGGQCVDKYDGYVCDCSMTPFGGSDCT. 3 disulfides stabilise this stretch: Cys-863–Cys-874, Cys-868–Cys-883, and Cys-885–Cys-895. Asn-933, Asn-949, Asn-978, Asn-997, Asn-1011, and Asn-1052 each carry an N-linked (GlcNAc...) asparagine glycan. Residues 1109–1129 form a helical membrane-spanning segment; the sequence is AIIGGGILALSLFILCMSSLI. Residues 1130–1180 are Cytoplasmic-facing; that stretch reads CYMRSRPEGVYKTNETGENCSPSRSEEPLVHNTTSNNNNNPTYASNKEYFC. Polar residues predominate over residues 1142-1152; that stretch reads TNETGENCSPS. The segment at 1142–1180 is disordered; it reads TNETGENCSPSRSEEPLVHNTTSNNNNNPTYASNKEYFC. Over residues 1161-1171 the composition is skewed to low complexity; the sequence is NTTSNNNNNPT.

It belongs to the neurexin family. Interacts (via the intracellular domain) with F-actin; the interaction is required for anchoring F-actin at the membrane for gap junction formation. As to expression, highly expressed in pharyngeal g1 and g2 gland cells, pharyngeal muscle cells and the unilateral GABAergic RIS interneuron (at protein level). Expressed in pm5 pharyngeal muscle cells and the nerve ring.

Its subcellular location is the cell membrane. It localises to the cell junction. It is found in the gap junction. Functionally, required for gap junction formation, playing a role in anchoring the cytoskeletal component F-actin to the membrane of adjacent cells and thus facilitating the formation of gap junction channels in embryonic cells, muscle cells and neuronal cells. Plays a role in maintaining gap junction activity to promote pharyngeal muscle contraction. The sequence is that of Neurexin like receptor 1 from Caenorhabditis elegans.